The sequence spans 239 residues: MPKSCAARQCCNRYSSRRKQLTFHRFPFSRPELLKEWVLNIGRGNFKPKQHTVICSEHFRPECFSAFGNRKNLKHNAVPTVFAFQDPTQQVRENTDPASERGNASSSQKEKVLPEAGAGEDSPGRNMDTALEELQLPPNAEGHVKQVSPRRPQATEAVGRPTGPAGLRRTPNKQPSDHSYALLDLDSLKKKLFLTLKENEKLRKRLQAQRLVMRRMSSRLRACKGHQGLQARLGPEQQS.

The segment at 1–82 (MPKSCAARQC…LKHNAVPTVF (82 aa)) adopts a THAP-type zinc-finger fold. The interval 84 to 177 (FQDPTQQVRE…RRTPNKQPSD (94 aa)) is disordered. Serine 122 is subject to Phosphoserine. The HCFC1-binding motif (HBM) signature appears at 177–180 (DHSY).

Component of a THAP1/THAP3-HCFC1-OGT complex that contains at least, either THAP1 or THAP3, HCFC1 and OGT. Interacts directly with OGT and HCFC1 (via its HBM). Highly expressed in heart, skeletal muscle and placenta. Weaker expression in brain, kidney and liver.

Functionally, component of a THAP1/THAP3-HCFC1-OGT complex that is required for the regulation of the transcriptional activity of RRM1. The sequence is that of THAP domain-containing protein 3 (THAP3) from Homo sapiens (Human).